Reading from the N-terminus, the 293-residue chain is Ribosomal protein L11 methyltransferase (293 aa).

S-adenosyl-L-methionine contacts are provided by Thr145, Gly166, Asp188, and Asn230.

It belongs to the methyltransferase superfamily. PrmA family.

The protein localises to the cytoplasm. The enzyme catalyses L-lysyl-[protein] + 3 S-adenosyl-L-methionine = N(6),N(6),N(6)-trimethyl-L-lysyl-[protein] + 3 S-adenosyl-L-homocysteine + 3 H(+). Functionally, methylates ribosomal protein L11. This chain is Ribosomal protein L11 methyltransferase, found in Haemophilus ducreyi (strain 35000HP / ATCC 700724).